Here is a 292-residue protein sequence, read N- to C-terminus: NADH-cytochrome b5 reductase 1 (292 aa).

Residues 12–32 (ALLVVGTAIFAVLVGAKFLGG) traverse the membrane as a helical segment. The region spanning 43-148 (TEFQNFVLKE…RGPKGAMVYT (106 aa)) is the FAD-binding FR-type domain. Residues 128–143 (TTLK…GPKG) and 154–191 (HIGM…QVDL) each bind FAD.

The protein belongs to the flavoprotein pyridine nucleotide cytochrome reductase family. As to quaternary structure, monomer. Component of the 2-(3-amino-3-carboxypropyl)histidine synthase complex composed of dph1, dph2, dph3 and a NADH-dependent reductase, predominantly cbr1. It depends on FAD as a cofactor.

Its subcellular location is the mitochondrion outer membrane. The catalysed reaction is 2 Fe(III)-[cytochrome b5] + NADH = 2 Fe(II)-[cytochrome b5] + NAD(+) + H(+). It carries out the reaction 2 Fe(3+)-[Dph3] + NADH = 2 Fe(2+)-[Dph3] + NAD(+) + H(+). It functions in the pathway protein modification; peptidyl-diphthamide biosynthesis. Its function is as follows. NADH-dependent reductase for dph3 and cytochrome b5. Required for the first step of diphthamide biosynthesis, a post-translational modification of histidine which occurs in elongation factor 2. Dph1 and dph2 transfer a 3-amino-3-carboxypropyl (ACP) group from S-adenosyl-L-methionine (SAM) to a histidine residue, the reaction is assisted by a reduction system comprising dph3 and a NADH-dependent reductase, predominantly cbr1. By reducing dph3, also involved in the formation of the tRNA wobble base modification mcm5s 2U (5-methoxycarbonylmethyl-2-thiouridine), mediated by the elongator complex. The cytochrome b5/NADH cytochrome b5 reductase electron transfer system supports the catalytic activity of several sterol biosynthetic enzymes. The chain is NADH-cytochrome b5 reductase 1 (cbr1) from Aspergillus oryzae (strain ATCC 42149 / RIB 40) (Yellow koji mold).